Reading from the N-terminus, the 1174-residue chain is Male determiner protein Mdmd(Y) (1174 aa).

The segment covering 1–15 has biased composition (basic and acidic residues); that stretch reads MNATDAESRKPENKP. Disordered stretches follow at residues 1-51, 79-109, and 136-259; these read MNAT…SGQR, RKDG…HPVE, and KQLS…LRRS. A compositionally biased stretch (low complexity) spans 16 to 35; it reads SSESSSSGSTSGSSDGEVSS. A compositionally biased stretch (polar residues) spans 36–47; sequence KTYFKNNKSKVL. Basic and acidic residues predominate over residues 79–92; the sequence is RKDGSNEMLPKEDS. Residues 138-153 are compositionally biased toward low complexity; it reads LSAYRSRSRSTRLSYS. Basic residues predominate over residues 167-180; the sequence is SRYKKSVLRNRRTS. A compositionally biased stretch (basic and acidic residues) spans 183–200; the sequence is HGRDSSTTKRSVSRDKDN. The span at 201–223 shows a compositional bias: basic residues; it reads RLRRRIGSSRSHTRSHSRFRRSE. The span at 235-259 shows a compositional bias: basic and acidic residues; sequence RSQERRHERRRSMSSDYERIALRRS. In terms of domain architecture, MIF4G spans 348-531; the sequence is KKYIHGYINK…KVLFQVRRDG (184 aa). Low complexity predominate over residues 597-608; that stretch reads DSDGSFGSGSNS. Residues 597 to 616 are disordered; the sequence is DSDGSFGSGSNSETALSDCD. One can recognise an MI domain in the interval 641 to 757; the sequence is ALRRTIYLTL…SWDVLDCIKL (117 aa). Over residues 840-857 the composition is skewed to low complexity; the sequence is SAPSSSSSSSLSSELSAP. 2 disordered regions span residues 840-1045 and 1089-1135; these read SAPS…SRTK and KGGP…SREY. 2 stretches are compositionally biased toward basic residues: residues 869-886 and 895-909; these read KKKH…KNPS and IVGK…KTIK. The span at 910–924 shows a compositional bias: basic and acidic residues; sequence RRTDKDNSSSKDNFL. The span at 926 to 957 shows a compositional bias: low complexity; the sequence is SESSSNESISLDSLSSELFAPSSYSSSESSND. A compositionally biased stretch (basic residues) spans 963-1001; the sequence is KHKGKNKKMTKKKNPSNKREKTKKKLSKNKKAPNKNTKK. Residues 1010–1020 show a composition bias toward low complexity; that stretch reads SSESSISESKS. Over residues 1034–1045 the composition is skewed to basic residues; sequence RKKRVTSKSRTK. Over residues 1089–1118 the composition is skewed to basic and acidic residues; that stretch reads KGGPNCRKDNYGNRQNHEISQRHDSEIKRR. Positions 1119–1130 are enriched in basic residues; it reads REERKKRHHEKN.

The protein belongs to the CWC22 family. As to quaternary structure, component of the spliceosome C complex.

It localises to the nucleus speckle. Male determiner protein (M-factor) that controls male somatic sexual differentiation. Acts as a dominant factor that regulates the mRNA splicing of transformer (tra) and doublesex (dsx) transcripts and promotes expression of male splice forms of tra and dsx. Probably acts as a component of the spliceosome C complex required for mRNA splicing factor and exon-junction complex (EJC) assembly. Hinders eIF4AIII from non-specifically binding RNA and escorts it to the splicing machinery to promote EJC assembly on mature mRNAs. The protein is Male determiner protein Mdmd(Y) of Musca domestica (House fly).